Consider the following 213-residue polypeptide: ATP phosphoribosyltransferase (213 aa).

This sequence belongs to the ATP phosphoribosyltransferase family. Short subfamily. Heteromultimer composed of HisG and HisZ subunits.

The protein localises to the cytoplasm. The enzyme catalyses 1-(5-phospho-beta-D-ribosyl)-ATP + diphosphate = 5-phospho-alpha-D-ribose 1-diphosphate + ATP. The protein operates within amino-acid biosynthesis; L-histidine biosynthesis; L-histidine from 5-phospho-alpha-D-ribose 1-diphosphate: step 1/9. Functionally, catalyzes the condensation of ATP and 5-phosphoribose 1-diphosphate to form N'-(5'-phosphoribosyl)-ATP (PR-ATP). Has a crucial role in the pathway because the rate of histidine biosynthesis seems to be controlled primarily by regulation of HisG enzymatic activity. This is ATP phosphoribosyltransferase from Crocosphaera subtropica (strain ATCC 51142 / BH68) (Cyanothece sp. (strain ATCC 51142)).